Consider the following 147-residue polypeptide: Large ribosomal subunit protein uL15 (147 aa).

The interval 1 to 45 (MRLEDLRPTPGAMKKRKRVGRGPGSGHGKTSGRGHKGQKARGSGK) is disordered. Positions 30-44 (TSGRGHKGQKARGSG) are enriched in basic residues.

The protein belongs to the universal ribosomal protein uL15 family. In terms of assembly, part of the 50S ribosomal subunit.

In terms of biological role, binds to the 23S rRNA. The polypeptide is Large ribosomal subunit protein uL15 (Thermotoga sp. (strain RQ2)).